We begin with the raw amino-acid sequence, 159 residues long: CASP-like protein 1C1 (159 aa).

At 1 to 6 (MAKIKR) the chain is on the cytoplasmic side. The chain crosses the membrane as a helical span at residues 7–27 (IITTLVRLLVLGAALSATIVM). Residues 28–50 (VTSHDSAEVLNLSFDAKYTNARA) lie on the Extracellular side of the membrane. N-linked (GlcNAc...) asparagine glycosylation is present at asparagine 38. A helical transmembrane segment spans residues 51–73 (FVYFAITNAIASGYSFIALFLSF). Topologically, residues 74 to 86 (STPLWHLVFLLDV) are cytoplasmic. A helical membrane pass occupies residues 87-107 (FMTLLLTSSISVALAIADVGK). The Extracellular portion of the chain corresponds to 108-130 (KGNSHAGWLPVCGQVPEFCDHVT). Residues 131–151 (GALIAGFSAAVLYLVLLLFSI) form a helical membrane-spanning segment. Residues 152–159 (HAVLNPKP) are Cytoplasmic-facing.

The protein belongs to the Casparian strip membrane proteins (CASP) family. As to quaternary structure, homodimer and heterodimers.

It localises to the cell membrane. The sequence is that of CASP-like protein 1C1 from Vitis vinifera (Grape).